The sequence spans 400 residues: Nicotinate phosphoribosyltransferase (400 aa).

Phosphohistidine; by autocatalysis is present on histidine 220.

This sequence belongs to the NAPRTase family. Post-translationally, transiently phosphorylated on a His residue during the reaction cycle. Phosphorylation strongly increases the affinity for substrates and increases the rate of nicotinate D-ribonucleotide production. Dephosphorylation regenerates the low-affinity form of the enzyme, leading to product release.

It carries out the reaction nicotinate + 5-phospho-alpha-D-ribose 1-diphosphate + ATP + H2O = nicotinate beta-D-ribonucleotide + ADP + phosphate + diphosphate. It functions in the pathway cofactor biosynthesis; NAD(+) biosynthesis; nicotinate D-ribonucleotide from nicotinate: step 1/1. Its function is as follows. Catalyzes the synthesis of beta-nicotinate D-ribonucleotide from nicotinate and 5-phospho-D-ribose 1-phosphate at the expense of ATP. This is Nicotinate phosphoribosyltransferase from Cronobacter sakazakii (strain ATCC BAA-894) (Enterobacter sakazakii).